The primary structure comprises 252 residues: MEMKQISETTLKITISMDDLEERGMELKDFLIPQEKTEEFFYTVMDELDLPDNFKDSGMLSFRVTPRKDRLDVFVTKSDLNKEINFDDLADLGDVSQMTPEDFFKTIEKSMIEKGDVNAHEKLEKIEEMMEEAVDAVMTQNAEEQKEEESPFEPLDYVHYVLDFMTIQDAITFSKTVTFPIEASELYKSSDRYHMTILLDIQNQPSYYANVMYARLIEHALPGSKTRAYLQEHAHQLLEDHAVTELQKVELV.

This sequence belongs to the MecA family. Homodimer.

Functionally, enables the recognition and targeting of unfolded and aggregated proteins to the ClpC protease or to other proteins involved in proteolysis. This chain is Adapter protein MecA, found in Streptococcus uberis (strain ATCC BAA-854 / 0140J).